Reading from the N-terminus, the 184-residue chain is Nucleoporin-62 C-terminal-like protein (184 aa).

Residues 117–151 (RILHGEVNKVKLDQKRLEQELDFILSQQQELEFLL) adopt a coiled-coil conformation.

Belongs to the nucleoporin NSP1/NUP62 family.

The polypeptide is Nucleoporin-62 C-terminal-like protein (NUP62CL) (Homo sapiens (Human)).